We begin with the raw amino-acid sequence, 286 residues long: Protein METABOLIC NETWORK MODULATOR 1 (286 aa).

Over residues 1-10 (MEKESHEENN) the composition is skewed to basic and acidic residues. 3 disordered regions span residues 1 to 60 (MEKE…DDEA), 123 to 146 (VMHH…GSGV), and 181 to 204 (GGER…SGAS). Residues 20 to 29 (KRKRGRPRKQ) show a composition bias toward basic residues. Positions 30-39 (LKLESNEHSL) are enriched in basic and acidic residues. Positions 131–140 (KRGRKSRFRE) are enriched in basic residues. Over residues 191 to 204 (PMQTETGSQASGAS) the composition is skewed to polar residues.

In terms of tissue distribution, mailny observed in young seedlings and in emerging leaves.

Its function is as follows. Lineage-specific modulator of primary metabolism. Influences flowering time. The polypeptide is Protein METABOLIC NETWORK MODULATOR 1 (Arabidopsis thaliana (Mouse-ear cress)).